A 411-amino-acid chain; its full sequence is Metacaspase-1B (411 aa).

A disordered region spans residues 1–97 (MYHRHSAPPP…PPLEAQQFGN (97 aa)). Pro residues predominate over residues 7–65 (APPPPGRSRGYPPPQQQWPPQPYQYLPYPPQGPPPAHTFPPPAHRSYPSPYPTPPPHSP). Catalysis depends on residues His-198 and Cys-254.

Belongs to the peptidase C14B family.

Functionally, involved in cell death (apoptosis). This is Metacaspase-1B (casB) from Neosartorya fischeri (strain ATCC 1020 / DSM 3700 / CBS 544.65 / FGSC A1164 / JCM 1740 / NRRL 181 / WB 181) (Aspergillus fischerianus).